Reading from the N-terminus, the 1732-residue chain is Serine/threonine-protein kinase MRCK alpha (1732 aa).

Positions 77–343 (FEILKVIGRG…IEDFKKHPFF (267 aa)) constitute a Protein kinase domain. ATP contacts are provided by residues 83–91 (IGRGAFGEV) and Lys106. Asp201 functions as the Proton acceptor in the catalytic mechanism. 2 positions are modified to phosphoserine; by autocatalysis: Ser222 and Ser234. At Thr240 the chain carries Phosphothreonine; by autocatalysis. Residues 344 to 414 (SGIDWDNIRN…TSSCVLSDRS (71 aa)) form the AGC-kinase C-terminal domain. Coiled coils occupy residues 437 to 820 (NNLA…WEAQ) and 880 to 943 (LELQ…SEKG). Positions 968–1003 (ERSPSCTPASKGRRTVDSTPLSVHTPTLRKKGCPGS) are disordered. A Phorbol-ester/DAG-type zinc finger spans residues 1012–1062 (THQFFVKSFTTPTKCHQCTSLMVGLIRQGCSCEVCGFSCHITCVNKAPTTC). One can recognise a PH domain in the interval 1082–1201 (GTAYEGHVRI…WVGVLSELHK (120 aa)). The residue at position 1127 (Ser1127) is a Phosphoserine. The CNH domain maps to 1227 to 1499 (IKTTQAAAII…RPLNNEGSLN (273 aa)). Position 1545 is a phosphoserine (Ser1545). Residues 1571-1584 (ISNPTNFNHIAHMG) form the CRIB domain. The segment at 1591 to 1732 (ILKDLPMNPR…ESTDRGSWDP (142 aa)) is disordered. Residues 1604-1619 (SRTVFSGSVSIPSITK) show a composition bias toward polar residues. Phosphoserine is present on residues Ser1611, Ser1613, Ser1629, Ser1651, Ser1664, Ser1669, and Ser1693. The span at 1625-1640 (GRSMSASSGLSARSSA) shows a compositional bias: low complexity. Low complexity predominate over residues 1665 to 1674 (PSEGSLSSGG). A compositionally biased stretch (low complexity) spans 1697-1707 (STASNSSNLSS). Ser1719 and Ser1721 each carry phosphoserine.

This sequence belongs to the protein kinase superfamily. AGC Ser/Thr protein kinase family. DMPK subfamily. As to quaternary structure, homodimer and homotetramer via the coiled coil regions. Interacts tightly with GTP-bound but not GDP-bound CDC42. Forms a tripartite complex with MYO18A and LURAP1 with the latter acting as an adapter connecting CDC42BPA and MYO18A. LURAP1 binding results in activation of CDC42BPA by abolition of its negative autoregulation. Interacts with LURAP1. Interacts (via AGC-kinase C-terminal domain) with FAM89B/LRAP25 (via LRR repeat). Forms a tripartite complex with FAM89B/LRAP25 and LIMK1. Mg(2+) serves as cofactor. In terms of processing, proteolytically cleaved by caspases upon apoptosis induction. The cleavage at Asp-478 by CASP3 increases its kinase activity (in vitro). In terms of tissue distribution, abundant in the heart, brain, skeletal muscle, kidney, and pancreas, with little or no expression in the lung and liver.

It is found in the cytoplasm. Its subcellular location is the cell projection. It localises to the lamellipodium. It carries out the reaction L-seryl-[protein] + ATP = O-phospho-L-seryl-[protein] + ADP + H(+). The catalysed reaction is L-threonyl-[protein] + ATP = O-phospho-L-threonyl-[protein] + ADP + H(+). With respect to regulation, maintained in an inactive, closed conformation by an interaction between the kinase domain and the negative autoregulatory C-terminal coiled-coil region. Agonist binding to the phorbol ester binding site disrupts this, releasing the kinase domain to allow N-terminus-mediated dimerization and kinase activation by transautophosphorylation. Inhibited by chelerythrine chloride. Functionally, serine/threonine-protein kinase which is an important downstream effector of CDC42 and plays a role in the regulation of cytoskeleton reorganization and cell migration. Regulates actin cytoskeletal reorganization via phosphorylation of PPP1R12C and MYL9/MLC2. In concert with MYO18A and LURAP1, is involved in modulating lamellar actomyosin retrograde flow that is crucial to cell protrusion and migration. Phosphorylates: PPP1R12A, LIMK1 and LIMK2. May play a role in TFRC-mediated iron uptake. In concert with FAM89B/LRAP25 mediates the targeting of LIMK1 to the lamellipodium resulting in its activation and subsequent phosphorylation of CFL1 which is important for lamellipodial F-actin regulation. Triggers the formation of an extrusion apical actin ring required for epithelial extrusion of apoptotic cells. In Homo sapiens (Human), this protein is Serine/threonine-protein kinase MRCK alpha.